The primary structure comprises 172 residues: Translationally-controlled tumor protein (172 aa).

One can recognise a TCTP domain in the interval methionine 1–cysteine 172. Phosphoserine occurs at positions 46 and 53. The residue at position 64 (serine 64) is a Phosphoserine; by PLK1. The segment at valine 70–cysteine 172 is required for reduction of TSC22D1 protein stability.

Belongs to the TCTP family. Homodimer. Interacts with STEAP3. Interacts with TSC22D1; interaction results in the destabilization of TSC22D1 protein.

It localises to the cytoplasm. Its function is as follows. Involved in calcium binding and microtubule stabilization. Acts as a negative regulator of TSC22D1-mediated apoptosis, via interaction with and destabilization of TSC22D1 protein. The protein is Translationally-controlled tumor protein (Tpt1) of Mus musculus (Mouse).